We begin with the raw amino-acid sequence, 347 residues long: UPF0284 protein M1627_0030 (347 aa).

Belongs to the UPF0284 family.

This is UPF0284 protein M1627_0030 from Saccharolobus islandicus (strain M.16.27) (Sulfolobus islandicus).